We begin with the raw amino-acid sequence, 187 residues long: COMM domain-containing protein 1 (187 aa).

The COMM domain maps to 112-186 (SLQKISWRID…SIQKHLQAKS (75 aa)).

Belongs to the COMM domain-containing protein 1 family. In terms of assembly, component of the commander complex consisting of the CCC subcomplex and the retriever subcomplex.

Its function is as follows. Scaffold protein in the commander complex that is essential for endosomal recycling of transmembrane cargos; the commander complex is composed of the CCC subcomplex and the retriever subcomplex. The chain is COMM domain-containing protein 1 (commd1) from Dictyostelium discoideum (Social amoeba).